We begin with the raw amino-acid sequence, 315 residues long: Methionyl-tRNA formyltransferase (315 aa).

113–116 (SILP) is a binding site for (6S)-5,6,7,8-tetrahydrofolate.

Belongs to the Fmt family.

It carries out the reaction L-methionyl-tRNA(fMet) + (6R)-10-formyltetrahydrofolate = N-formyl-L-methionyl-tRNA(fMet) + (6S)-5,6,7,8-tetrahydrofolate + H(+). In terms of biological role, attaches a formyl group to the free amino group of methionyl-tRNA(fMet). The formyl group appears to play a dual role in the initiator identity of N-formylmethionyl-tRNA by promoting its recognition by IF2 and preventing the misappropriation of this tRNA by the elongation apparatus. In Aliivibrio fischeri (strain ATCC 700601 / ES114) (Vibrio fischeri), this protein is Methionyl-tRNA formyltransferase.